We begin with the raw amino-acid sequence, 564 residues long: Dihydroxy-acid dehydratase (564 aa).

Asp-80 is a Mg(2+) binding site. Cys-121 contributes to the [2Fe-2S] cluster binding site. Asp-122 and Lys-123 together coordinate Mg(2+). Lys-123 carries the post-translational modification N6-carboxylysine. Residue Cys-194 coordinates [2Fe-2S] cluster. Residue Glu-447 participates in Mg(2+) binding. Ser-473 functions as the Proton acceptor in the catalytic mechanism.

The protein belongs to the IlvD/Edd family. Homodimer. [2Fe-2S] cluster is required as a cofactor. It depends on Mg(2+) as a cofactor.

It catalyses the reaction (2R)-2,3-dihydroxy-3-methylbutanoate = 3-methyl-2-oxobutanoate + H2O. It carries out the reaction (2R,3R)-2,3-dihydroxy-3-methylpentanoate = (S)-3-methyl-2-oxopentanoate + H2O. It functions in the pathway amino-acid biosynthesis; L-isoleucine biosynthesis; L-isoleucine from 2-oxobutanoate: step 3/4. Its pathway is amino-acid biosynthesis; L-valine biosynthesis; L-valine from pyruvate: step 3/4. Functionally, functions in the biosynthesis of branched-chain amino acids. Catalyzes the dehydration of (2R,3R)-2,3-dihydroxy-3-methylpentanoate (2,3-dihydroxy-3-methylvalerate) into 2-oxo-3-methylpentanoate (2-oxo-3-methylvalerate) and of (2R)-2,3-dihydroxy-3-methylbutanoate (2,3-dihydroxyisovalerate) into 2-oxo-3-methylbutanoate (2-oxoisovalerate), the penultimate precursor to L-isoleucine and L-valine, respectively. The sequence is that of Dihydroxy-acid dehydratase from Listeria welshimeri serovar 6b (strain ATCC 35897 / DSM 20650 / CCUG 15529 / CIP 8149 / NCTC 11857 / SLCC 5334 / V8).